The following is a 338-amino-acid chain: Formamidase (338 aa).

Positions valine 15 to proline 257 constitute a CN hydrolase domain. The active-site Proton acceptor is glutamate 61. The active-site Proton donor is the lysine 130. The active-site Nucleophile is the cysteine 163.

This sequence belongs to the carbon-nitrogen hydrolase superfamily. Aliphatic amidase family.

The enzyme catalyses formamide + H2O = formate + NH4(+). Functionally, is an aliphatic amidase with a restricted substrate specificity, as it only hydrolyzes formamide. In Pseudomonas syringae pv. tomato (strain ATCC BAA-871 / DC3000), this protein is Formamidase.